A 306-amino-acid chain; its full sequence is uncharacterized protein (306 aa).

The protein to L.delbrueckii similar ORF in glnA 5'region.

This is an uncharacterized protein from Lactobacillus delbrueckii subsp. bulgaricus.